The primary structure comprises 216 residues: Large ribosomal subunit protein uL1z (216 aa).

Belongs to the universal ribosomal protein uL1 family. As to quaternary structure, interacts with the GTPase NUG2.

This Arabidopsis thaliana (Mouse-ear cress) protein is Large ribosomal subunit protein uL1z (RPL10AA).